Here is a 319-residue protein sequence, read N- to C-terminus: Coproporphyrin III ferrochelatase 2 (319 aa).

Fe-coproporphyrin III is bound by residues Tyr13, Arg30, 46 to 47 (RY), Ser54, and Tyr125. Residues His181 and Glu262 each contribute to the Fe(2+) site.

It belongs to the ferrochelatase family.

Its subcellular location is the cytoplasm. It catalyses the reaction Fe-coproporphyrin III + 2 H(+) = coproporphyrin III + Fe(2+). The protein operates within porphyrin-containing compound metabolism; protoheme biosynthesis. Involved in coproporphyrin-dependent heme b biosynthesis. Catalyzes the insertion of ferrous iron into coproporphyrin III to form Fe-coproporphyrin III. This Bacillus thuringiensis subsp. konkukian (strain 97-27) protein is Coproporphyrin III ferrochelatase 2.